The sequence spans 150 residues: uncharacterized protein (150 aa).

It localises to the plastid. The protein localises to the chloroplast. This is an uncharacterized protein from Pyropia yezoensis (Susabi-nori).